The following is an 83-amino-acid chain: Large ribosomal subunit protein eL14 (83 aa).

The protein belongs to the eukaryotic ribosomal protein eL14 family. Part of the 50S ribosomal subunit.

The protein is Large ribosomal subunit protein eL14 of Thermococcus kodakarensis (strain ATCC BAA-918 / JCM 12380 / KOD1) (Pyrococcus kodakaraensis (strain KOD1)).